Consider the following 456-residue polypeptide: Hydroxymethylglutaryl coenzyme A synthase (456 aa).

A (3S)-3-hydroxy-3-methylglutaryl-CoA-binding site is contributed by A34. Residue E85 is the Proton donor/acceptor of the active site. Positions 119, 161, 211, 258, 267, 335, and 369 each coordinate (3S)-3-hydroxy-3-methylglutaryl-CoA. C119 acts as the Acyl-thioester intermediate in catalysis. H258 acts as the Proton donor/acceptor in catalysis.

It belongs to the thiolase-like superfamily. HMG-CoA synthase family.

It catalyses the reaction acetoacetyl-CoA + acetyl-CoA + H2O = (3S)-3-hydroxy-3-methylglutaryl-CoA + CoA + H(+). HMG-CoA synthase; part of the gene cluster that mediates the biosynthesis of 1233A, a natural compound known as an inhibitor of HMG-CoA synthase in the mevalonate pathway and with antibacterial and antifungal activities. This enzyme condenses acetyl-CoA with acetoacetyl-CoA to form HMG-CoA, which is the substrate for HMG-CoA reductase. As part of the 1233A biosynthesis cluster, is involved in conferring self-resistance to 1233A. This chain is Hydroxymethylglutaryl coenzyme A synthase, found in Fusarium sp.